We begin with the raw amino-acid sequence, 483 residues long: Proline--tRNA ligase (483 aa).

This sequence belongs to the class-II aminoacyl-tRNA synthetase family. ProS type 3 subfamily. In terms of assembly, homodimer.

The protein resides in the cytoplasm. It catalyses the reaction tRNA(Pro) + L-proline + ATP = L-prolyl-tRNA(Pro) + AMP + diphosphate. Functionally, catalyzes the attachment of proline to tRNA(Pro) in a two-step reaction: proline is first activated by ATP to form Pro-AMP and then transferred to the acceptor end of tRNA(Pro). This is Proline--tRNA ligase from Sulfurisphaera tokodaii (strain DSM 16993 / JCM 10545 / NBRC 100140 / 7) (Sulfolobus tokodaii).